We begin with the raw amino-acid sequence, 502 residues long: Lysine--tRNA ligase (502 aa).

Positions 398 and 405 each coordinate Mg(2+).

It belongs to the class-II aminoacyl-tRNA synthetase family. Homodimer. The cofactor is Mg(2+).

The protein localises to the cytoplasm. The catalysed reaction is tRNA(Lys) + L-lysine + ATP = L-lysyl-tRNA(Lys) + AMP + diphosphate. The protein is Lysine--tRNA ligase of Thermotoga sp. (strain RQ2).